A 118-amino-acid polypeptide reads, in one-letter code: Fluoride-specific ion channel FluC 2 (118 aa).

4 consecutive transmembrane segments (helical) span residues 1-21 (MMEALLVATGGFFGAITRFAI), 33-53 (FPIATFLINITGAFLLGYIIG), 55-75 (GVTTGWQLLLGTGFMGAFTTF), and 93-113 (ILFLYLSATYIIGILFAFLGM). Residues G70 and T73 each contribute to the Na(+) site.

Belongs to the fluoride channel Fluc/FEX (TC 1.A.43) family.

Its subcellular location is the cell membrane. The enzyme catalyses fluoride(in) = fluoride(out). Na(+) is not transported, but it plays an essential structural role and its presence is essential for fluoride channel function. Fluoride-specific ion channel. Important for reducing fluoride concentration in the cell, thus reducing its toxicity. This is Fluoride-specific ion channel FluC 2 from Bacillus cereus (strain ATCC 10987 / NRS 248).